Here is a 90-residue protein sequence, read N- to C-terminus: Lectin-1 (90 aa).

Residue Gln-1 is modified to Pyrrolidone carboxylic acid. A disulfide bridge connects residues Cys-46 and Cys-71.

In terms of processing, the N-terminus is blocked. Post-translationally, contains seven disulfide bonds. Proteolytically cleaved. Major mature form may consist of cleaved, disulfide-bonded N-terminal and C-terminal chains.

Functionally, lectin with specificity for complex N-linked glycans and O-linked glycans. Has hemagglutinating activity towards rabbit erythrocytes. The sequence is that of Lectin-1 from Hypnea musciformis (Red alga).